We begin with the raw amino-acid sequence, 606 residues long: Leucine-rich repeat and immunoglobulin-like domain-containing nogo receptor-interacting protein 1 (606 aa).

Positions 1 to 27 are cleaved as a signal peptide; that stretch reads MILQLPSCLCPILLIVVGSILSGSASG. Cystine bridges form between cysteine 28/cysteine 34 and cysteine 32/cysteine 43. The LRRNT domain occupies 28–57; sequence CPQRCDCSPQDRSVLCHRKRYLDVPEGIPT. Topologically, residues 28–547 are extracellular; sequence CPQRCDCSPQ…FDIKTLIIAT (520 aa). LRR repeat units follow at residues 58–79, 82–103, 106–127, 130–151, 154–175, 178–199, 202–223, 250–271, 274–295, 298–319, and 322–343; these read DTRL…EFSA, YLEE…AFNG, NLRS…VFTG, NLTQ…MFQD, NLKS…AFRG, SLEE…ALSH, GLIT…SFKR, NLTS…AIRH, YLRF…MLYE, RLQE…AFRG, and HLKV…SFHS. An N-linked (GlcNAc...) asparagine glycan is attached at asparagine 130. Residue asparagine 188 is glycosylated (N-linked (GlcNAc...) asparagine). Residues asparagine 250, asparagine 260, and asparagine 279 are each glycosylated (N-linked (GlcNAc...) asparagine). N-linked (GlcNAc...) asparagine glycosylation is found at asparagine 327, asparagine 374, asparagine 478, asparagine 491, asparagine 512, asparagine 523, and asparagine 528. Residues 355–409 form the LRRCT domain; it reads NPLACDCRLLWIFRRRWRLNFSRQQPSCSSPEYVQGKEFKDFPDVLQPNYFTCRR. 3 disulfide bridges follow: cysteine 359–cysteine 382, cysteine 361–cysteine 407, and cysteine 432–cysteine 483. The region spanning 397–496 is the Ig-like C2-type domain; it reads PDVLQPNYFT…NAGGNDTSLA (100 aa). The helical transmembrane segment at 548 to 568 threads the bilayer; that stretch reads TMGFISFLGVVLFCLVLLFLW. Residues 569 to 606 lie on the Cytoplasmic side of the membrane; it reads SRGKGNTKHNIEIEYVPRKSDAGLSSADAPRKFNMKMI.

Its subcellular location is the cell membrane. Functionally, may play a role in regulating axonal regeneration and plasticity in the adult central nervous system. This is Leucine-rich repeat and immunoglobulin-like domain-containing nogo receptor-interacting protein 1 (lingo1) from Xenopus tropicalis (Western clawed frog).